The chain runs to 260 residues: Phosphatidylglycerol--prolipoprotein diacylglyceryl transferase (260 aa).

4 consecutive transmembrane segments (helical) span residues 17 to 37, 52 to 72, 85 to 105, and 113 to 133; these read VVKWYGIMMALGVIALVSWIF, LTAAIIAIPSGIIFSKLLHVI, ILSGEGLTIFGAIIGATIGLW, and FNLGYLLDVAVPGILLGQAIG. Position 134 (arginine 134) interacts with a 1,2-diacyl-sn-glycero-3-phospho-(1'-sn-glycerol). The next 3 membrane-spanning stretches (helical) occupy residues 170–190, 198–218, and 227–247; these read VPTQAYEIIFLLCLFAFSLFI, GQLFLLYISLYAAWRVAIGFV, and GLEQAQVVGLILIALAVPFFI.

It belongs to the Lgt family.

The protein localises to the cell membrane. The enzyme catalyses L-cysteinyl-[prolipoprotein] + a 1,2-diacyl-sn-glycero-3-phospho-(1'-sn-glycerol) = an S-1,2-diacyl-sn-glyceryl-L-cysteinyl-[prolipoprotein] + sn-glycerol 1-phosphate + H(+). It functions in the pathway protein modification; lipoprotein biosynthesis (diacylglyceryl transfer). Its function is as follows. Catalyzes the transfer of the diacylglyceryl group from phosphatidylglycerol to the sulfhydryl group of the N-terminal cysteine of a prolipoprotein, the first step in the formation of mature lipoproteins. The protein is Phosphatidylglycerol--prolipoprotein diacylglyceryl transferase of Dehalococcoides mccartyi (strain ATCC BAA-2266 / KCTC 15142 / 195) (Dehalococcoides ethenogenes (strain 195)).